We begin with the raw amino-acid sequence, 521 residues long: Probable inorganic phosphate transporter 1-3 (521 aa).

The Cytoplasmic segment spans residues 1-24; the sequence is MADQQLGVLKALDVAKTQLYHFTA. A helical transmembrane segment spans residues 25–45; it reads IVIAGMGFFTDAYDLFCVSLV. Over 46–70 the chain is Extracellular; that stretch reads TKLLGRLYYFNPTSAKPGSLPPHVA. Residues 71 to 91 traverse the membrane as a helical segment; that stretch reads AAVNGVALCGTLAGQLFFGWL. Residues 92–99 are Cytoplasmic-facing; sequence GDKLGRKK. Residues 100–120 traverse the membrane as a helical segment; it reads VYGITLIMMILCSVASGLSLG. Over 121–131 the chain is Extracellular; sequence NSAKGVMTTLC. A helical membrane pass occupies residues 132–152; that stretch reads FFRFWLGFGIGGDYPLSATIM. Over 153–161 the chain is Cytoplasmic; the sequence is SEYANKKTR. The chain crosses the membrane as a helical span at residues 162–182; it reads GAFIAAVFAMQGVGILAGGFV. At 183–211 the chain is on the extracellular side; sequence ALAVSSIFDKKFPSPTYEQDRFLSTPPQA. The chain crosses the membrane as a helical span at residues 212-232; the sequence is DYIWRIIVMFGALPAALTYYW. Over 233–292 the chain is Cytoplasmic; that stretch reads RMKMPETARYTALVAKNIKQATADMSKVLQTDLELEERVEDDVKDPKKNYGLFSKEFLRR. The chain crosses the membrane as a helical span at residues 293-313; that stretch reads HGLHLLGTTSTWFLLDIAFYS. Topologically, residues 314 to 348 are extracellular; it reads QNLFQKDIFSAIGWIPKAATMNAIHEVFKIARAQT. Residues 349-369 traverse the membrane as a helical segment; sequence LIALCSTVPGYWFTVAFIDII. Over 370 to 371 the chain is Cytoplasmic; sequence GR. Residues 372 to 392 form a helical membrane-spanning segment; sequence FAIQLMGFFMMTVFMFAIAFP. The Extracellular segment spans residues 393-402; sequence YNHWILPDNR. Residues 403-423 traverse the membrane as a helical segment; that stretch reads IGFVVMYSLTFFFANFGPNAT. Residues 424-441 are Cytoplasmic-facing; that stretch reads TFIVPAEIFPARLRSTCH. The helical transmembrane segment at 442-462 threads the bilayer; that stretch reads GISAATGKAGAIVGAFGFLYA. The Extracellular portion of the chain corresponds to 463–484; that stretch reads AQPQDKTKTDAGYPPGIGVKNS. Residues 485–505 traverse the membrane as a helical segment; that stretch reads LIMLGVINFVGMLFTFLVPEP. Over 506 to 521 the chain is Cytoplasmic; sequence KGKSLEELSGEAEVDK.

It belongs to the major facilitator superfamily. Phosphate:H(+) symporter (TC 2.A.1.9) family. As to expression, mainly expressed in roots, especially in the stele of the primary root, the pericycle and trichoblasts of secondary roots. To a lower extent, present in hydathodes and vascular tissues of young leaves.

The protein resides in the membrane. Functionally, high-affinity transporter for external inorganic phosphate. This is Probable inorganic phosphate transporter 1-3 (PHT1-3) from Arabidopsis thaliana (Mouse-ear cress).